A 189-amino-acid polypeptide reads, in one-letter code: Transcription factor FapR (189 aa).

Belongs to the FapR family.

Transcriptional factor involved in regulation of membrane lipid biosynthesis by repressing genes involved in fatty acid and phospholipid metabolism. The sequence is that of Transcription factor FapR from Listeria welshimeri serovar 6b (strain ATCC 35897 / DSM 20650 / CCUG 15529 / CIP 8149 / NCTC 11857 / SLCC 5334 / V8).